Here is a 735-residue protein sequence, read N- to C-terminus: Protein PAT1 homolog 2 (735 aa).

Disordered stretches follow at residues 39–93 (TFGL…REVK) and 336–366 (QLHP…PDPY). 2 stretches are compositionally biased toward basic and acidic residues: residues 49–59 (EPTKQEEDHKK) and 67–93 (PKIE…REVK). The span at 346-356 (SQRQRPQSSSR) shows a compositional bias: low complexity.

It belongs to the PAT1 family. As to quaternary structure, interacts with ribonucleoprotein complex components. Interacts with cpeb.

It is found in the cytoplasm. Its subcellular location is the nucleus. RNA-binding protein that acts as a translational repressor. The polypeptide is Protein PAT1 homolog 2 (patl2) (Xenopus tropicalis (Western clawed frog)).